The sequence spans 247 residues: Chymase (247 aa).

An N-terminal signal peptide occupies residues 1 to 17 (MCLLSLPLLLFLQYTRA). The propeptide at 18–21 (KAGE) is activation peptide. In terms of domain architecture, Peptidase S1 spans 22-245 (VIGGTECKPH…YRPWINKILK (224 aa)). Cys51 and Cys67 form a disulfide bridge. The active-site Charge relay system is the His66. Asn103 carries N-linked (GlcNAc...) asparagine glycosylation. Catalysis depends on Asp110, which acts as the Charge relay system. N-linked (GlcNAc...) asparagine glycosylation is present at Asn121. 2 disulfide bridges follow: Cys144–Cys209 and Cys175–Cys188. The Charge relay system role is filled by Ser203.

It belongs to the peptidase S1 family. Granzyme subfamily.

The protein localises to the secreted. The protein resides in the cytoplasmic granule. The catalysed reaction is Preferential cleavage: Phe-|-Xaa &gt; Tyr-|-Xaa &gt; Trp-|-Xaa &gt; Leu-|-Xaa.. In terms of biological role, major secreted protease of mast cells with suspected roles in vasoactive peptide generation, extracellular matrix degradation, and regulation of gland secretion. This is Chymase from Cavia porcellus (Guinea pig).